The sequence spans 153 residues: MNATKFVVLLVISVLCAIVTARHVEEVSKETKLGTSLPKSTTKGIGAQLSAAGITSSSSDVYSSATGFNNPKGPDANAYENGYTSTSGQVIAKGRKARVSSASASTAKGDAKAAVTRKAAAARANGKVASASRVKGSSEKKKGKGKKGKGKKD.

The N-terminal stretch at 1–21 (MNATKFVVLLVISVLCAIVTA) is a signal peptide. Disordered stretches follow at residues 63 to 82 (SSAT…YENG) and 122 to 153 (ARAN…GKKD). Positions 122-132 (ARANGKVASAS) are enriched in low complexity. Over residues 141-153 (KKGKGKKGKGKKD) the composition is skewed to basic residues.

It belongs to the UPF0540 family.

This is UPF0540 protein At1g62220 from Arabidopsis thaliana (Mouse-ear cress).